A 92-amino-acid chain; its full sequence is Long neurotoxin 1 (92 aa).

An N-terminal signal peptide occupies residues 1–21; it reads MKILLLTLVVVTIVCLDLAYT. 5 cysteine pairs are disulfide-bonded: Cys-24–Cys-41, Cys-34–Cys-62, Cys-47–Cys-51, Cys-66–Cys-77, and Cys-78–Cys-83.

This sequence belongs to the three-finger toxin family. Long-chain subfamily. Type II alpha-neurotoxin sub-subfamily. As to expression, expressed by the venom gland.

It is found in the secreted. Functionally, binds with high affinity to muscular (alpha-1/CHRNA1) and neuronal (alpha-7/CHRNA7) nicotinic acetylcholine receptor (nAChR) and inhibits acetylcholine from binding to the receptor, thereby impairing neuromuscular and neuronal transmission. This is Long neurotoxin 1 from Hydrophis hardwickii (Hardwick's spine-bellied seasnake).